A 297-amino-acid polypeptide reads, in one-letter code: Carbamate kinase (297 aa).

It belongs to the carbamate kinase family.

It localises to the cytoplasm. It carries out the reaction hydrogencarbonate + NH4(+) + ATP = carbamoyl phosphate + ADP + H2O + H(+). It catalyses the reaction carbamate + ATP = carbamoyl phosphate + ADP. The catalysed reaction is hydrogencarbonate + NH4(+) = carbamate + H2O + H(+). The protein operates within nitrogen metabolism; (S)-allantoin degradation. Its function is as follows. Kinase involved in the anaerobic nitrogen utilization via the assimilation of allantoin. Catalyzes the transfer of a phosphate group from carbamoyl phosphate to ADP to produce ATP and leave carbamate, which spontaneously hydrolyzes to ammonia and hydrogencarbonate. The protein is Carbamate kinase of Escherichia coli O157:H7.